We begin with the raw amino-acid sequence, 725 residues long: Ribosomal RNA large subunit methyltransferase K/L (725 aa).

The region spanning 46–157 (VAYRLCLWSR…RGQATLSLDL (112 aa)) is the THUMP domain.

Belongs to the methyltransferase superfamily. RlmKL family.

The protein localises to the cytoplasm. It carries out the reaction guanosine(2445) in 23S rRNA + S-adenosyl-L-methionine = N(2)-methylguanosine(2445) in 23S rRNA + S-adenosyl-L-homocysteine + H(+). The catalysed reaction is guanosine(2069) in 23S rRNA + S-adenosyl-L-methionine = N(2)-methylguanosine(2069) in 23S rRNA + S-adenosyl-L-homocysteine + H(+). Functionally, specifically methylates the guanine in position 2445 (m2G2445) and the guanine in position 2069 (m7G2069) of 23S rRNA. This chain is Ribosomal RNA large subunit methyltransferase K/L, found in Pseudomonas aeruginosa (strain ATCC 15692 / DSM 22644 / CIP 104116 / JCM 14847 / LMG 12228 / 1C / PRS 101 / PAO1).